Here is a 149-residue protein sequence, read N- to C-terminus: Nucleoside diphosphate kinase (149 aa).

Positions 9, 57, 85, 91, 102, and 112 each coordinate ATP. Residue His-115 is the Pros-phosphohistidine intermediate of the active site.

Belongs to the NDK family. As to quaternary structure, homotetramer. It depends on Mg(2+) as a cofactor.

It localises to the cytoplasm. It carries out the reaction a 2'-deoxyribonucleoside 5'-diphosphate + ATP = a 2'-deoxyribonucleoside 5'-triphosphate + ADP. The enzyme catalyses a ribonucleoside 5'-diphosphate + ATP = a ribonucleoside 5'-triphosphate + ADP. In terms of biological role, major role in the synthesis of nucleoside triphosphates other than ATP. The ATP gamma phosphate is transferred to the NDP beta phosphate via a ping-pong mechanism, using a phosphorylated active-site intermediate. This is Nucleoside diphosphate kinase from Roseiflexus castenholzii (strain DSM 13941 / HLO8).